Reading from the N-terminus, the 447-residue chain is N-succinylarginine dihydrolase (447 aa).

Substrate contacts are provided by residues 19–28 (AGLSFGNEAS), N110, and 137–138 (HR). E174 is an active-site residue. R212 is a binding site for substrate. The active site involves H248. The substrate site is built by D250 and N359. The Nucleophile role is filled by C365.

This sequence belongs to the succinylarginine dihydrolase family. In terms of assembly, homodimer.

The enzyme catalyses N(2)-succinyl-L-arginine + 2 H2O + 2 H(+) = N(2)-succinyl-L-ornithine + 2 NH4(+) + CO2. It functions in the pathway amino-acid degradation; L-arginine degradation via AST pathway; L-glutamate and succinate from L-arginine: step 2/5. Catalyzes the hydrolysis of N(2)-succinylarginine into N(2)-succinylornithine, ammonia and CO(2). In Escherichia coli O8 (strain IAI1), this protein is N-succinylarginine dihydrolase.